The chain runs to 1173 residues: Alpha-mannosidase 2 (1173 aa).

A disordered region spans residues 1–21; sequence MPFSSYIGNSRRSSTGGGTGG. Over 1–50 the chain is Cytoplasmic; the sequence is MPFSSYIGNSRRSSTGGGTGGWGQSLLPTALSKSKLAINRKPRKRTLVVN. Residues 51–71 traverse the membrane as a helical; Signal-anchor segment; it reads FIFANFFVIALTVSLLFFLLT. The Lumenal segment spans residues 72 to 1173; that stretch reads LFHFGVPGPI…AYKLELRPHK (1102 aa). The N-linked (GlcNAc...) asparagine glycan is linked to N106. 2 residues coordinate Zn(2+): H162 and D164. N262 carries N-linked (GlcNAc...) asparagine glycosylation. Position 276 (D276) interacts with Zn(2+). D276 functions as the Nucleophile in the catalytic mechanism. A glycan (N-linked (GlcNAc...) asparagine) is linked at N467. H564 provides a ligand contact to Zn(2+). 6 N-linked (GlcNAc...) asparagine glycosylation sites follow: N675, N772, N782, N991, N1098, and N1108.

It belongs to the glycosyl hydrolase 38 family. Homodimer; disulfide-linked. Interacts with GALT1. Requires Zn(2+) as cofactor. In terms of processing, glycosylated.

It is found in the golgi apparatus membrane. It carries out the reaction N(4)-{beta-D-GlcNAc-(1-&gt;2)-alpha-D-Man-(1-&gt;3)-[alpha-D-Man-(1-&gt;3)-[alpha-D-Man-(1-&gt;6)]-alpha-D-Man-(1-&gt;6)]-beta-D-Man-(1-&gt;4)-beta-D-GlcNAc-(1-&gt;4)-beta-D-GlcNAc}-L-asparaginyl-[protein] + 2 H2O = 2 alpha-D-mannopyranose + an N(4)-{beta-D-GlcNAc-(1-&gt;2)-alpha-D-Man-(1-&gt;3)-[alpha-D-Man-(1-&gt;6)]-beta-D-Man-(1-&gt;4)-beta-D-GlcNAc-(1-&gt;4)-beta-D-GlcNAc}-L-asparaginyl-[protein]. It functions in the pathway protein modification; protein glycosylation. Its activity is regulated as follows. Inhibited by 1 mM Cu(2+) and by the class II alpha-mannosidase inhibitor swainsonine. Catalyzes the first committed step in the biosynthesis of complex N-glycans. It controls conversion of high mannose to complex N-glycans; the final hydrolytic step in the N-glycan maturation pathway. Converts GlcNAcMan(5)GlcNAc(2) (Man5Gn) into GlcNAcMan(3)GlcNAc(2) (MGn) by sequential removal of two alpha1,6- and alpha1,3-linked mannose residues from the alpha1,6-mannose branch of the substrate. To a lesser extent, also able to cleave beta1,2-xylosylated Man5Gn-glycopeptide (Man5GnX-GP) and pyridylaminated substrates Man5Gn-PA and Man5GnX-PA, but not active toward Man5-glycopeptide. Required for resistance to salt stress. The sequence is that of Alpha-mannosidase 2 from Arabidopsis thaliana (Mouse-ear cress).